Here is a 537-residue protein sequence, read N- to C-terminus: MGCVQCKDKEATKLTEERDGSLNQSSGFRYGTDPTPQHYPSFGVTSIPNYNNFHAAGGQGLTVFGGVSSSSHTGTLRTRGGTGVTLFVALYDYEARTEDDLSFHKGEKFQILNSSEGDWWEARSLTTGETGYIPSNYVAPVDSIQAEEWYFGKLGRKDAERQLLSFGNPRGTFLIRESETTKGAYSLSIRDWDDMKGDHVKHYKIRKLDNGGYYITTRAQFETLQQLVQHYSERAAGLCCRLVVPCHKGMPRLTDLSVKTKDVWEIPRESLQLIKRLGNGQFGEVWMGTWNGNTKVAIKTLKPGTMSPESFLEEAQIMKKLKHDKLVQLYAVVSEEPIYIVTEYMNKGSLLDFLKDGEGRALKLPNLVDMAAQVAAGMAYIERMNYIHRDLRSANILVGNGLICKIADFGLARLIEDNEYTARQGAKFPIKWTAPEAALYGRFTIKSDVWSFGILLTELVTKGRVPYPGMNNREVLEQVERGYRMPCPQDCPISLHELMIHCWKKDPEERPTFEYLQGFLEDYFTATEPQYQPGENL.

Residue Gly-2 is the site of N-myristoyl glycine attachment. Residues Cys-3 and Cys-6 are each lipidated (S-palmitoyl cysteine). At Thr-12 the chain carries Phosphothreonine; by PKC. 2 positions are modified to phosphoserine: Ser-21 and Ser-26. Residues 82 to 143 enclose the SH3 domain; sequence TGVTLFVALY…PSNYVAPVDS (62 aa). The 98-residue stretch at 149–246 folds into the SH2 domain; it reads WYFGKLGRKD…GLCCRLVVPC (98 aa). The residue at position 185 (Tyr-185) is a Phosphotyrosine. Residues 271–524 enclose the Protein kinase domain; the sequence is LQLIKRLGNG…YLQGFLEDYF (254 aa). ATP-binding positions include 277–285 and Lys-299; that span reads LGNGQFGEV. Residue Asp-390 is the Proton acceptor of the active site. Tyr-420 is subject to Phosphotyrosine; by autocatalysis. Phosphotyrosine; by CSK is present on Tyr-531.

This sequence belongs to the protein kinase superfamily. Tyr protein kinase family. SRC subfamily. Interacts (via its SH3 domain) with PIK3R1 and PRMT8. Interacts with FYB1, PAG1, and SH2D1A. Interacts with CD79A (tyrosine-phosphorylated form); the interaction increases FYN activity. Interacts (via SH2 domain) with CSF1R (tyrosine phosphorylated). Interacts with TOM1L1 (phosphorylated form). Interacts with KDR (tyrosine phosphorylated). Interacts (via SH3 domain) with KLHL2 (via N-terminus). Interacts with SH2D1A and SLAMF1. Interacts with ITCH; the interaction phosphorylates ITCH and negatively regulates its activity. Interacts with FASLG. Interacts with RUNX3. Interacts with KIT. Interacts with EPHA8; possible downstream effector of EPHA8 in regulation of cell adhesion. Interacts with PTK2/FAK1; this interaction leads to PTK2/FAK1 phosphorylation and activation. Interacts with CAV1; this interaction couples integrins to the Ras-ERK pathway. Interacts with UNC119. Interacts (via SH2 domain) with PTPRH (phosphorylated form). Interacts with PTPRO (phosphorylated form). Interacts with PTPRB (phosphorylated form). Interacts with FYB2. Interacts with DSCAM. Interacts with SKAP1 and FYB1; this interaction promotes the phosphorylation of CLNK. Interacts with NEDD9; in the presence of PTK2. Mn(2+) is required as a cofactor. Autophosphorylated at Tyr-420. Phosphorylation on the C-terminal tail at Tyr-531 by CSK maintains the enzyme in an inactive state. PTPRC/CD45 dephosphorylates Tyr-531 leading to activation. Ultraviolet B (UVB) strongly increase phosphorylation at Thr-12 and kinase activity, and promotes translocation from the cytoplasm to the nucleus. Dephosphorylation at Tyr-420 by PTPN2 negatively regulates T-cell receptor signaling. Phosphorylated at tyrosine residues, which can be enhanced by NTN1. Post-translationally, palmitoylated. Palmitoylation at Cys-3 and Cys-6, probably by ZDHHC21, regulates subcellular location.

It localises to the cytoplasm. The protein localises to the nucleus. Its subcellular location is the cell membrane. It is found in the perikaryon. It catalyses the reaction L-tyrosyl-[protein] + ATP = O-phospho-L-tyrosyl-[protein] + ADP + H(+). With respect to regulation, inhibited by phosphorylation of Tyr-531 by leukocyte common antigen and activated by dephosphorylation of this site. In terms of biological role, non-receptor tyrosine-protein kinase that plays a role in many biological processes including regulation of cell growth and survival, cell adhesion, integrin-mediated signaling, cytoskeletal remodeling, cell motility, immune response and axon guidance. Inactive FYN is phosphorylated on its C-terminal tail within the catalytic domain. Following activation by PKA, the protein subsequently associates with PTK2/FAK1, allowing PTK2/FAK1 phosphorylation, activation and targeting to focal adhesions. Involved in the regulation of cell adhesion and motility through phosphorylation of CTNNB1 (beta-catenin) and CTNND1 (delta-catenin). Regulates cytoskeletal remodeling by phosphorylating several proteins including the actin regulator WAS and the microtubule-associated proteins MAP2 and MAPT. Promotes cell survival by phosphorylating AGAP2/PIKE-A and preventing its apoptotic cleavage. Participates in signal transduction pathways that regulate the integrity of the glomerular slit diaphragm (an essential part of the glomerular filter of the kidney) by phosphorylating several slit diaphragm components including NPHS1, KIRREL1 and TRPC6. Plays a role in neural processes by phosphorylating DPYSL2, a multifunctional adapter protein within the central nervous system, ARHGAP32, a regulator for Rho family GTPases implicated in various neural functions, and SNCA, a small pre-synaptic protein. Involved in reelin signaling by mediating phosphorylation of DAB1 following reelin (RELN)-binding to its receptor. Participates in the downstream signaling pathways that lead to T-cell differentiation and proliferation following T-cell receptor (TCR) stimulation. Phosphorylates PTK2B/PYK2 in response to T-cell receptor activation. Also participates in negative feedback regulation of TCR signaling through phosphorylation of PAG1, thereby promoting interaction between PAG1 and CSK and recruitment of CSK to lipid rafts. CSK maintains LCK and FYN in an inactive form. Promotes CD28-induced phosphorylation of VAV1. In mast cells, phosphorylates CLNK after activation of immunoglobulin epsilon receptor signaling. Can also promote CD244-mediated NK cell activation. This is Tyrosine-protein kinase Fyn from Sus scrofa (Pig).